Reading from the N-terminus, the 226-residue chain is PKHD-type hydroxylase HNE_2117 (226 aa).

The 101-residue stretch at 78-178 (TVLTPRFNRY…RLASFLWTQS (101 aa)) folds into the Fe2OG dioxygenase domain. The Fe cation site is built by His-96, Asp-98, and His-159. Arg-169 lines the 2-oxoglutarate pocket.

Requires Fe(2+) as cofactor. L-ascorbate is required as a cofactor.

The protein is PKHD-type hydroxylase HNE_2117 of Hyphomonas neptunium (strain ATCC 15444).